Reading from the N-terminus, the 447-residue chain is Argininosuccinate synthase (447 aa).

Residues 17–25 (AFSGGLDTS) and alanine 43 contribute to the ATP site. Residue tyrosine 99 participates in L-citrulline binding. ATP-binding residues include glycine 129 and threonine 131. 3 residues coordinate L-aspartate: threonine 131, asparagine 135, and aspartate 136. Asparagine 135 contacts L-citrulline. Aspartate 136 provides a ligand contact to ATP. Residues arginine 139 and serine 192 each coordinate L-citrulline. Aspartate 194 contributes to the ATP binding site. Positions 201, 203, and 280 each coordinate L-citrulline.

The protein belongs to the argininosuccinate synthase family. Type 2 subfamily. Homotetramer.

Its subcellular location is the cytoplasm. It carries out the reaction L-citrulline + L-aspartate + ATP = 2-(N(omega)-L-arginino)succinate + AMP + diphosphate + H(+). It participates in amino-acid biosynthesis; L-arginine biosynthesis; L-arginine from L-ornithine and carbamoyl phosphate: step 2/3. The protein is Argininosuccinate synthase of Escherichia coli O8 (strain IAI1).